The sequence spans 409 residues: Elongation factor Tu, chloroplastic (409 aa).

In terms of domain architecture, tr-type G spans 10–214; it reads KPHVNIGTIG…AVDEYIPTPE (205 aa). Positions 19-26 are G1; it reads GHVDHGKT. 19–26 is a binding site for GTP; the sequence is GHVDHGKT. Thr-26 is a binding site for Mg(2+). The tract at residues 60-64 is G2; the sequence is GITIN. The segment at 81-84 is G3; the sequence is DCPG. GTP is bound by residues 81-85 and 136-139; these read DCPGH and NKED. Positions 136 to 139 are G4; that stretch reads NKED. Residues 174 to 176 are G5; the sequence is SAL.

Belongs to the TRAFAC class translation factor GTPase superfamily. Classic translation factor GTPase family. EF-Tu/EF-1A subfamily.

The protein localises to the plastid. It localises to the chloroplast. It catalyses the reaction GTP + H2O = GDP + phosphate + H(+). GTP hydrolase that promotes the GTP-dependent binding of aminoacyl-tRNA to the A-site of ribosomes during protein biosynthesis. The protein is Elongation factor Tu, chloroplastic (tufA) of Trieres chinensis (Marine centric diatom).